The following is a 384-amino-acid chain: Succinyl-diaminopimelate desuccinylase (384 aa).

His-73 is a binding site for Zn(2+). Asp-75 is an active-site residue. Residue Asp-106 coordinates Zn(2+). The Proton acceptor role is filled by Glu-140. Zn(2+) is bound by residues Glu-141, Glu-169, and His-358.

Belongs to the peptidase M20A family. DapE subfamily. As to quaternary structure, homodimer. Requires Zn(2+) as cofactor. The cofactor is Co(2+).

The catalysed reaction is N-succinyl-(2S,6S)-2,6-diaminopimelate + H2O = (2S,6S)-2,6-diaminopimelate + succinate. It participates in amino-acid biosynthesis; L-lysine biosynthesis via DAP pathway; LL-2,6-diaminopimelate from (S)-tetrahydrodipicolinate (succinylase route): step 3/3. Functionally, catalyzes the hydrolysis of N-succinyl-L,L-diaminopimelic acid (SDAP), forming succinate and LL-2,6-diaminopimelate (DAP), an intermediate involved in the bacterial biosynthesis of lysine and meso-diaminopimelic acid, an essential component of bacterial cell walls. The polypeptide is Succinyl-diaminopimelate desuccinylase (Pelagibacter ubique (strain HTCC1062)).